A 256-amino-acid polypeptide reads, in one-letter code: Imidazole glycerol phosphate synthase subunit HisF (256 aa).

Active-site residues include D12 and D131.

It belongs to the HisA/HisF family. In terms of assembly, heterodimer of HisH and HisF.

The protein localises to the cytoplasm. The enzyme catalyses 5-[(5-phospho-1-deoxy-D-ribulos-1-ylimino)methylamino]-1-(5-phospho-beta-D-ribosyl)imidazole-4-carboxamide + L-glutamine = D-erythro-1-(imidazol-4-yl)glycerol 3-phosphate + 5-amino-1-(5-phospho-beta-D-ribosyl)imidazole-4-carboxamide + L-glutamate + H(+). It participates in amino-acid biosynthesis; L-histidine biosynthesis; L-histidine from 5-phospho-alpha-D-ribose 1-diphosphate: step 5/9. In terms of biological role, IGPS catalyzes the conversion of PRFAR and glutamine to IGP, AICAR and glutamate. The HisF subunit catalyzes the cyclization activity that produces IGP and AICAR from PRFAR using the ammonia provided by the HisH subunit. The chain is Imidazole glycerol phosphate synthase subunit HisF from Azotobacter vinelandii (strain DJ / ATCC BAA-1303).